The sequence spans 453 residues: Sodium/alanine symporter AgcS (453 aa).

Residues 1–17 (MDFVSLVNTVNSFVWGP) are Extracellular-facing. The helical transmembrane segment at 18–32 (YMLVLLLGTGIFLTL) threads the bilayer. Over 33 to 67 (RLGFMQIHTLPYALKLAFSKHQDETSEGDISHFQA) the chain is Cytoplasmic. A helical membrane pass occupies residues 68 to 89 (LMTALAATIGTGNIAGVATAYV). Thr75 lines the D-alanine pocket. L-alanine is bound by residues Thr75 and Gly79. Position 80 (Asn80) interacts with D-alanine. The Extracellular portion of the chain corresponds to 90–92 (LGG). The helical transmembrane segment at 93-111 (PGAIFWMWVTAFFGMATKY) threads the bilayer. Over 112–148 (AEAVLAIKYRTVDDNGEMAGGPMYFLEKGLPDHGLGK) the chain is Cytoplasmic. The chain crosses the membrane as a helical span at residues 149–179 (ILGVAFAFFGAFAAFGIGNMVQTNSVADAVA). Residue Gln170 participates in D-alanine binding. An L-alanine-binding site is contributed by Gln170. The Extracellular portion of the chain corresponds to 180–186 (SNFGVDP). A helical transmembrane segment spans residues 187-202 (LITGFVLAIFTAAVIL). Topologically, residues 203–206 (GGIK) are cytoplasmic. The helical transmembrane segment at 207 to 233 (SIGKATGIIVPFMAVFYILAGLVILAM) threads the bilayer. The Extracellular portion of the chain corresponds to 234-258 (NIGYIIPAFGTIFSSAFNFSAGFGA). A helical membrane pass occupies residues 259–274 (LIGTAIMWGVKRGVFS). 273 to 274 (FS) contacts D-alanine. An L-alanine-binding site is contributed by 273–276 (FSNE). At 275–300 (NEAGLGSAPIAAAAAKTDHPGRQALV) the chain is on the cytoplasmic side. A helical transmembrane segment spans residues 301-322 (SMTGTFLDTIVVCTITGLVLTI). Residues 323–350 (AGLKAFPGLTDLTGASLTAASFDALMPM) lie on the Extracellular side of the membrane. A helical membrane pass occupies residues 351-378 (GGLIVTIGLVFFAYSTVLGWSYYGEKCF). Topologically, residues 379-386 (EYLIGTKG) are cytoplasmic. The helical transmembrane segment at 387 to 403 (IRLYRIAFVLVAFWGAT) threads the bilayer. Over 404–408 (ASLPL) the chain is Extracellular. The helical transmembrane segment at 409–430 (VWNIADTLNGAMAIPNLIGLLL) threads the bilayer. The Cytoplasmic portion of the chain corresponds to 431-453 (LSGVVVSETKAFNEIRKNEAKNA).

The protein belongs to the alanine or glycine:cation symporter (AGCS) (TC 2.A.25) family.

It is found in the cell membrane. The enzyme catalyses D-alanine(in) + Na(+)(in) = D-alanine(out) + Na(+)(out). It carries out the reaction L-alanine(in) + Na(+)(in) = L-alanine(out) + Na(+)(out). The catalysed reaction is glycine(in) + Na(+)(in) = glycine(out) + Na(+)(out). Functionally, catalyzes the sodium-dependent uptake of extracellular D-alanine and L-alanine. Can also transport glycine. Binds glycine and both enantiomers of alanine, while strictly excluding other amino acids. This chain is Sodium/alanine symporter AgcS, found in Methanococcus maripaludis (strain DSM 14266 / JCM 13030 / NBRC 101832 / S2 / LL).